A 501-amino-acid polypeptide reads, in one-letter code: uncharacterized protein (501 aa).

The Proton donor role is filled by glutamate 236. Glutamate 333 acts as the Nucleophile in catalysis.

The protein belongs to the glycosyl hydrolase 5 (cellulase A) family.

The protein resides in the mitochondrion intermembrane space. This is an uncharacterized protein from Saccharomyces cerevisiae (strain ATCC 204508 / S288c) (Baker's yeast).